The sequence spans 69 residues: FXYD domain-containing ion transport regulator 11 (69 aa).

A signal peptide spans 1-22; sequence MSQLTELVLLTVFLALFSRAEA. The Extracellular segment spans residues 23–33; sequence NPFVYNYEALR. Residues 34–54 form a helical membrane-spanning segment; sequence IGGLVFTCVLVAGAVTALCWG. Residues 55-69 are Cytoplasmic-facing; sequence QCKPKRKHDDDASKI.

It belongs to the FXYD family. Detected in adult gill and in larval skin at 2 days post-fertilization (at protein level). In adult gill, strong expression is found in the basal regions of the secondary lamellae.

The protein localises to the cell membrane. Functionally, may modulate the activity of a sodium/potassium-transporting ATPase. This chain is FXYD domain-containing ion transport regulator 11, found in Danio rerio (Zebrafish).